Reading from the N-terminus, the 699-residue chain is MNPIVKSFEYGQHTVTLETGVIARQADGAVMASMGDTTVLVTVVGKKEADPGRDFFPLTVNYQEKTYAAGKIPGGFFKREGRPSEDETLIARLIDRPIRPLFPDDFTNEVQVIITVVSVDPQIEPDIVSMIGTSAALAISGIPFNGPLGAARVGYVNGEYVLNPGAAELAGSELDLVVAGTQSAVLMVESEAKSLPEEVMLGAVVYGHDQQQVVINAINEFAAEAGKPRWNWTAPVKNEALVAQIKELAEEGLTAAYQIMAKQERYEAVGEVKKATIAKLQEANPDVNVREAADLLGSLEKNVVRGRIIAGMPRIDGREPDMIRALSVMAGVLPRTHGSALFTRGETQALVTCTLGTERDAQKIDSIMGERTNRFMLHYNFPPYSVGETGMVGSPKRREIGHGKLAWRGINAVMPSAEEFPYSVRVVSEITESNGSSSMASVCGTSLALMDAGVPIKTSVAGIAMGLVKEGDNFVVLSDILGDEDHLGDMDFKVAGTRDGVTALQMDIKIEGITKEIMEIALQQAYGARVHILNVMDQAIGSARPDISDFAPRITTIKINPEKIRDVIGKGGAVIRALTEETGTTIELEDDGTVKIASNNGDATREAIRRIEEITSEVEVGRLYTGKVIRIVDFGAFVNILPGKDGLVHISQISDERVANVSDHLQLNQEVTVKVMEVDRQGRVRLSIKEAQVKEPAAE.

Residues D485 and D491 each contribute to the Mg(2+) site. The KH domain occupies 552–611; sequence PRITTIKINPEKIRDVIGKGGAVIRALTEETGTTIELEDDGTVKIASNNGDATREAIRRI. The S1 motif domain occupies 621-689; that stretch reads GRLYTGKVIR…RQGRVRLSIK (69 aa).

This sequence belongs to the polyribonucleotide nucleotidyltransferase family. As to quaternary structure, component of the RNA degradosome, which is a multiprotein complex involved in RNA processing and mRNA degradation. Mg(2+) is required as a cofactor.

It is found in the cytoplasm. It carries out the reaction RNA(n+1) + phosphate = RNA(n) + a ribonucleoside 5'-diphosphate. Functionally, involved in mRNA degradation. Catalyzes the phosphorolysis of single-stranded polyribonucleotides processively in the 3'- to 5'-direction. The sequence is that of Polyribonucleotide nucleotidyltransferase from Shewanella amazonensis (strain ATCC BAA-1098 / SB2B).